A 268-amino-acid chain; its full sequence is Protein limb expression 1 homolog (268 aa).

It belongs to the LIX1 family. As to quaternary structure, interacts with ft (via intracellular domain) and ds (via intracellular domain).

The protein resides in the apical cell membrane. Its subcellular location is the cytoplasm. In terms of biological role, component of the Fat (ft) signaling pathway that functions in normal development of various organs such as the wing and leg. In developing imaginal disks, involved in regulating both the protein levels and apical localization of ft and ds. Involved in establishing planar cell polarity (PCP) along the anterior-posterior axis of the wing (the early Fz signaling event), probably by acting upstream of ds and ft to regulate Fz activity. This Drosophila melanogaster (Fruit fly) protein is Protein limb expression 1 homolog.